The following is a 97-amino-acid chain: Late embryogenesis abundant protein Lea5 (97 aa).

It belongs to the LEA type 3 family.

This chain is Late embryogenesis abundant protein Lea5 (LEA5), found in Citrus sinensis (Sweet orange).